A 100-amino-acid polypeptide reads, in one-letter code: Large ribosomal subunit protein eL14 (100 aa).

Belongs to the eukaryotic ribosomal protein eL14 family.

In Aeropyrum pernix (strain ATCC 700893 / DSM 11879 / JCM 9820 / NBRC 100138 / K1), this protein is Large ribosomal subunit protein eL14.